The chain runs to 273 residues: UPF0173 metal-dependent hydrolase Bpro_4324 (273 aa).

This sequence belongs to the UPF0173 family.

The protein is UPF0173 metal-dependent hydrolase Bpro_4324 of Polaromonas sp. (strain JS666 / ATCC BAA-500).